A 597-amino-acid chain; its full sequence is Hydrogenase-1 large chain (597 aa).

Ni(2+) contacts are provided by Cys76, Cys79, Cys576, and Cys579.

Belongs to the [NiFe]/[NiFeSe] hydrogenase large subunit family. In terms of assembly, heterodimer of a large and a small subunit. Ni(2+) serves as cofactor.

Its subcellular location is the cell membrane. The catalysed reaction is H2 + A = AH2. The sequence is that of Hydrogenase-1 large chain (hyaB) from Citrobacter freundii.